A 117-amino-acid polypeptide reads, in one-letter code: Iron-sulfur cluster insertion protein ErpA (117 aa).

The iron-sulfur cluster site is built by C45, C109, and C111.

This sequence belongs to the HesB/IscA family. In terms of assembly, homodimer. Iron-sulfur cluster serves as cofactor.

Required for insertion of 4Fe-4S clusters for at least IspG. The chain is Iron-sulfur cluster insertion protein ErpA from Chromohalobacter salexigens (strain ATCC BAA-138 / DSM 3043 / CIP 106854 / NCIMB 13768 / 1H11).